The chain runs to 382 residues: uncharacterized protein (382 aa).

Residues 1 to 92 (MQFLSVIPEQ…GATAYRNTEF (92 aa)) enclose the PE domain. Transmembrane regions (helical) follow at residues 23–43 (SALS…VSAA), 155–175 (AAVA…NGVV), 203–223 (FIVA…AVVG), 230–250 (TFLT…LAGV), 261–281 (LASG…VQLF), 284–304 (AFLL…IAVV), 315–335 (LVVP…AQFA), and 347–367 (LGAP…QGIG).

It belongs to the mycobacterial PE family.

Its subcellular location is the cell membrane. This is an uncharacterized protein from Mycobacterium bovis (strain ATCC BAA-935 / AF2122/97).